The following is a 457-amino-acid chain: Bifunctional protein GlmU (457 aa).

A pyrophosphorylase region spans residues 1–229 (MYNCAIILAA…YEEIMGVNSR (229 aa)). UDP-N-acetyl-alpha-D-glucosamine is bound by residues 8 to 11 (LAAG), K22, Q73, and 78 to 79 (GT). D103 serves as a coordination point for Mg(2+). G140, E155, N170, and N227 together coordinate UDP-N-acetyl-alpha-D-glucosamine. Residue N227 coordinates Mg(2+). The tract at residues 230 to 250 (VQLSEAEIVMRKRINHKHMVN) is linker. Residues 251–457 (GVTFIDCEST…WLDKKGLLKK (207 aa)) are N-acetyltransferase. UDP-N-acetyl-alpha-D-glucosamine is bound by residues R332 and K350. The active-site Proton acceptor is H362. UDP-N-acetyl-alpha-D-glucosamine is bound by residues Y365 and N376. Residues 385–386 (NY), A422, and R439 each bind acetyl-CoA.

In the N-terminal section; belongs to the N-acetylglucosamine-1-phosphate uridyltransferase family. It in the C-terminal section; belongs to the transferase hexapeptide repeat family. Homotrimer. Mg(2+) serves as cofactor.

It localises to the cytoplasm. It carries out the reaction alpha-D-glucosamine 1-phosphate + acetyl-CoA = N-acetyl-alpha-D-glucosamine 1-phosphate + CoA + H(+). The enzyme catalyses N-acetyl-alpha-D-glucosamine 1-phosphate + UTP + H(+) = UDP-N-acetyl-alpha-D-glucosamine + diphosphate. Its pathway is nucleotide-sugar biosynthesis; UDP-N-acetyl-alpha-D-glucosamine biosynthesis; N-acetyl-alpha-D-glucosamine 1-phosphate from alpha-D-glucosamine 6-phosphate (route II): step 2/2. It functions in the pathway nucleotide-sugar biosynthesis; UDP-N-acetyl-alpha-D-glucosamine biosynthesis; UDP-N-acetyl-alpha-D-glucosamine from N-acetyl-alpha-D-glucosamine 1-phosphate: step 1/1. The protein operates within bacterial outer membrane biogenesis; LPS lipid A biosynthesis. Catalyzes the last two sequential reactions in the de novo biosynthetic pathway for UDP-N-acetylglucosamine (UDP-GlcNAc). The C-terminal domain catalyzes the transfer of acetyl group from acetyl coenzyme A to glucosamine-1-phosphate (GlcN-1-P) to produce N-acetylglucosamine-1-phosphate (GlcNAc-1-P), which is converted into UDP-GlcNAc by the transfer of uridine 5-monophosphate (from uridine 5-triphosphate), a reaction catalyzed by the N-terminal domain. This is Bifunctional protein GlmU from Clostridium botulinum (strain ATCC 19397 / Type A).